The chain runs to 482 residues: Proline--tRNA ligase (482 aa).

The L-proline site is built by Thr-117, Glu-119, and Arg-148. 4 residues coordinate ATP: Arg-148, Glu-150, Gln-232, and Thr-235. His-237 contacts L-proline. Residue Ser-269 coordinates ATP. Residues 346–376 (EMRGVPLRVEIGPRDLEKGAAVISRRDTGEK) are interaction with tRNA. Zn(2+)-binding residues include Cys-436, Cys-441, Cys-464, and Cys-467.

This sequence belongs to the class-II aminoacyl-tRNA synthetase family. ProS type 3 subfamily. Homodimer. The dimer is functionally asymmetric: only one of the two active sites at a time is able to form prolyl-adenylate, and only one tRNA molecule binds per dimer. Interacts with LeuRS, which enhances tRNA(Pro) aminoacylation.

The protein localises to the cytoplasm. The enzyme catalyses tRNA(Pro) + L-proline + ATP = L-prolyl-tRNA(Pro) + AMP + diphosphate. In terms of biological role, catalyzes the attachment of proline to tRNA(Pro) in a two-step reaction: proline is first activated by ATP to form Pro-AMP and then transferred to the acceptor end of tRNA(Pro). Can inadvertently accommodate and process cysteine. The sequence is that of Proline--tRNA ligase (proS) from Methanothermobacter thermautotrophicus (strain ATCC 29096 / DSM 1053 / JCM 10044 / NBRC 100330 / Delta H) (Methanobacterium thermoautotrophicum).